The sequence spans 517 residues: PSTB2-interacting protein 1 (517 aa).

Interacts with PDR17/PSTB2 and SCS2.

In terms of biological role, phosphatidic acid-binding protein involved in interorganelle phosphatidylserine (PtdSer) transport. Linkks a PtdSer donor membrane (via binding of SCS2 and phosphatidic acid present in the donor membrane) with an acceptor membrane (via its interaction with PDR17), forming a zone of apposition that facilitates PtdSer transfer. In Saccharomyces cerevisiae (strain ATCC 204508 / S288c) (Baker's yeast), this protein is PSTB2-interacting protein 1.